A 33-amino-acid chain; its full sequence is Photosystem II reaction center protein Psb30 (33 aa).

The chain crosses the membrane as a helical span at residues Gln8–Phe28.

Belongs to the Psb30/Ycf12 family. PSII is composed of 1 copy each of membrane proteins PsbA, PsbB, PsbC, PsbD, PsbE, PsbF, PsbH, PsbI, PsbJ, PsbK, PsbL, PsbM, PsbT, PsbX, PsbY, PsbZ, Psb30/Ycf12, peripheral proteins of the oxygen-evolving complex and a large number of cofactors. It forms dimeric complexes.

Its subcellular location is the plastid. The protein localises to the chloroplast thylakoid membrane. Functionally, a core subunit of photosystem II (PSII), probably helps stabilize the reaction center. This Staurastrum punctulatum (Green alga) protein is Photosystem II reaction center protein Psb30.